Here is a 252-residue protein sequence, read N- to C-terminus: 2-succinyl-6-hydroxy-2,4-cyclohexadiene-1-carboxylate synthase (252 aa).

The protein belongs to the AB hydrolase superfamily. MenH family. In terms of assembly, monomer.

It catalyses the reaction 5-enolpyruvoyl-6-hydroxy-2-succinyl-cyclohex-3-ene-1-carboxylate = (1R,6R)-6-hydroxy-2-succinyl-cyclohexa-2,4-diene-1-carboxylate + pyruvate. It participates in quinol/quinone metabolism; 1,4-dihydroxy-2-naphthoate biosynthesis; 1,4-dihydroxy-2-naphthoate from chorismate: step 3/7. Its pathway is quinol/quinone metabolism; menaquinone biosynthesis. Catalyzes a proton abstraction reaction that results in 2,5-elimination of pyruvate from 2-succinyl-5-enolpyruvyl-6-hydroxy-3-cyclohexene-1-carboxylate (SEPHCHC) and the formation of 2-succinyl-6-hydroxy-2,4-cyclohexadiene-1-carboxylate (SHCHC). This is 2-succinyl-6-hydroxy-2,4-cyclohexadiene-1-carboxylate synthase from Klebsiella pneumoniae subsp. pneumoniae (strain ATCC 700721 / MGH 78578).